Consider the following 89-residue polypeptide: Insulin (89 aa).

3 cysteine pairs are disulfide-bonded: C7–C75, C19–C88, and C74–C79. The propeptide at D33–M66 is c peptide.

It belongs to the insulin family. In terms of assembly, heterodimer of a B chain and an A chain linked by two disulfide bonds.

The protein resides in the secreted. Functionally, insulin decreases blood glucose concentration. It increases cell permeability to monosaccharides, amino acids and fatty acids. It accelerates glycolysis, the pentose phosphate cycle, and glycogen synthesis in liver. This Callorhinchus milii (Ghost shark) protein is Insulin (ins).